The chain runs to 485 residues: Leukocyte receptor cluster member 9 (485 aa).

Residues 8-35 form a C3H1-type zinc finger; that stretch reads SEAPAVCRFFLEGRCRFGARCRQPHPGA. The disordered stretch occupies residues 212–247; that stretch reads ETRTGLDSSLETPEVDGPTKETGLNGTTELEMPDPS.

In Mus musculus (Mouse), this protein is Leukocyte receptor cluster member 9 (Leng9).